The chain runs to 491 residues: UDP-N-acetylmuramate--L-alanine ligase (491 aa).

ATP is bound at residue 126-132 (GTHGKTT).

The protein belongs to the MurCDEF family.

The protein localises to the cytoplasm. The enzyme catalyses UDP-N-acetyl-alpha-D-muramate + L-alanine + ATP = UDP-N-acetyl-alpha-D-muramoyl-L-alanine + ADP + phosphate + H(+). It functions in the pathway cell wall biogenesis; peptidoglycan biosynthesis. Cell wall formation. This is UDP-N-acetylmuramate--L-alanine ligase from Salmonella paratyphi C (strain RKS4594).